The primary structure comprises 173 residues: Small ribosomal subunit protein uS4c (173 aa).

Residues 94–155 form the S4 RNA-binding domain; it reads SRLDSKIYRS…TKLTSELIEK (62 aa).

The protein belongs to the universal ribosomal protein uS4 family. In terms of assembly, part of the 30S ribosomal subunit. Contacts protein S5. The interaction surface between S4 and S5 is involved in control of translational fidelity.

The protein localises to the plastid. Functionally, one of the primary rRNA binding proteins, it binds directly to 16S rRNA where it nucleates assembly of the body of the 30S subunit. With S5 and S12 plays an important role in translational accuracy. The polypeptide is Small ribosomal subunit protein uS4c (rps4) (Helicosporidium sp. subsp. Simulium jonesii (Green alga)).